A 126-amino-acid chain; its full sequence is Glycine cleavage system H protein (126 aa).

Residues V22 to K104 enclose the Lipoyl-binding domain. The residue at position 63 (K63) is an N6-lipoyllysine.

This sequence belongs to the GcvH family. In terms of assembly, the glycine cleavage system is composed of four proteins: P, T, L and H. Requires (R)-lipoate as cofactor.

In terms of biological role, the glycine cleavage system catalyzes the degradation of glycine. The H protein shuttles the methylamine group of glycine from the P protein to the T protein. This chain is Glycine cleavage system H protein, found in Bacteroides fragilis (strain YCH46).